A 313-amino-acid chain; its full sequence is Probable cell division protein WhiA (313 aa).

Residues 277–311 (SLKEVAAQVPDGPISKSGVNHRFQKIREIAKQLKE) constitute a DNA-binding region (H-T-H motif).

It belongs to the WhiA family.

In terms of biological role, involved in cell division and chromosome segregation. This Lactobacillus johnsonii (strain CNCM I-12250 / La1 / NCC 533) protein is Probable cell division protein WhiA.